The chain runs to 922 residues: TBC1 domain family member 2A (922 aa).

Residues 1-37 are disordered; sequence MEDAPERTPSSSESTQPPGLAREPEVVSPGDSEGCAR. The interval 1–168 is interaction with CADH1; sequence MEDAPERTPS…AENGPTLHLK (168 aa). Polar residues predominate over residues 8–17; the sequence is TPSSSESTQP. A PH domain is found at 43-141; sequence PKKLCGYLSK…WLQQLQMKRW (99 aa). Residues 228–297 are disordered; the sequence is NKQAQAAAHG…KRQSNTFPFF (70 aa). A compositionally biased stretch (basic and acidic residues) spans 262 to 271; that stretch reads LPEKEPEDPA. Residues 275-295 are compositionally biased toward polar residues; that stretch reads PRSSVPSGPTQKPKRQSNTFP. Residues 298–435 form an interaction with RAC1 region; that stretch reads SDGLARSRTA…QKLTEDLAQP (138 aa). Coiled-coil stretches lie at residues 302–333, 362–417, and 443–476; these read ARSRTAQEKVAALEQQVLMLTKELKSQKELVI, LELV…NHAK, and FLSQQERMEHLKDDMEAYRTQNRFLNSEIHQVTK. Residues 619–811 form the Rab-GAP TBC domain; the sequence is GVPREHRPRV…RVWDAFLYEG (193 aa). A coiled-coil region spans residues 869 to 904; it reads MKQLRQLRAAHRERLEAELRELELLKVEYLQRRASL. Position 914 is a phosphoserine (Ser-914).

Interacts with activated RAC1 and CDH1.

The protein resides in the cytoplasm. It is found in the cytoplasmic vesicle. It localises to the cell junction. In terms of biological role, acts as a GTPase-activating protein for RAB7A. Signal effector acting as a linker between RAC1 and RAB7A, leading to RAB7A inactivation and subsequent inhibition of cadherin degradation and reduced cell-cell adhesion. The polypeptide is TBC1 domain family member 2A (Tbc1d2) (Mus musculus (Mouse)).